We begin with the raw amino-acid sequence, 166 residues long: Small ribosomal subunit protein eS10 (166 aa).

A disordered region spans residues 95-166 (RRQTRPETAR…FGRGRGQQPQ (72 aa)). Basic and acidic residues predominate over residues 98–129 (TRPETARPRPKGLEGERPARLARGEGDRDAYR). Positions 143–154 (AGAGAATEFQFR) are enriched in low complexity. Positions 155–166 (GGFGRGRGQQPQ) are enriched in gly residues.

This sequence belongs to the eukaryotic ribosomal protein eS10 family. Component of the small ribosomal subunit.

The protein resides in the cytoplasm. It is found in the nucleus. It localises to the nucleolus. Its function is as follows. Component of the 40S ribosomal subunit. The ribosome is a large ribonucleoprotein complex responsible for the synthesis of proteins in the cell. The protein is Small ribosomal subunit protein eS10 (rps10) of Ictalurus punctatus (Channel catfish).